The chain runs to 231 residues: 7-cyano-7-deazaguanine synthase (231 aa).

Residue 8–18 (FSGGQDSTTCL) coordinates ATP. 4 residues coordinate Zn(2+): Cys-188, Cys-197, Cys-200, and Cys-203.

Belongs to the QueC family. Zn(2+) is required as a cofactor.

It catalyses the reaction 7-carboxy-7-deazaguanine + NH4(+) + ATP = 7-cyano-7-deazaguanine + ADP + phosphate + H2O + H(+). It functions in the pathway purine metabolism; 7-cyano-7-deazaguanine biosynthesis. Its function is as follows. Catalyzes the ATP-dependent conversion of 7-carboxy-7-deazaguanine (CDG) to 7-cyano-7-deazaguanine (preQ(0)). This Salmonella choleraesuis (strain SC-B67) protein is 7-cyano-7-deazaguanine synthase.